The chain runs to 293 residues: Coatomer subunit epsilon-2 (293 aa).

It belongs to the COPE family. Oligomeric complex that consists of at least the alpha, beta, beta', gamma, delta, epsilon and zeta subunits.

It is found in the cytoplasm. The protein localises to the golgi apparatus membrane. The protein resides in the cytoplasmic vesicle. Its subcellular location is the COPI-coated vesicle membrane. Functionally, the coatomer is a cytosolic protein complex that binds to dilysine motifs and reversibly associates with Golgi non-clathrin-coated vesicles, which further mediate biosynthetic protein transport from the ER, via the Golgi up to the trans Golgi network. The coatomer complex is required for budding from Golgi membranes, and is essential for the retrograde Golgi-to-ER transport of dilysine-tagged proteins. The sequence is that of Coatomer subunit epsilon-2 from Arabidopsis thaliana (Mouse-ear cress).